A 348-amino-acid polypeptide reads, in one-letter code: Isopentenyl-diphosphate delta-isomerase (348 aa).

14–15 (RK) is a binding site for substrate. FMN is bound by residues Ser-72, 73 to 75 (SMT), Ser-103, and Asn-131. Residue 103-105 (SQR) coordinates substrate. Gln-166 lines the substrate pocket. Glu-167 contributes to the Mg(2+) binding site. Residues Lys-198, Thr-228, 278 to 280 (GIR), and 299 to 300 (AR) contribute to the FMN site.

It belongs to the IPP isomerase type 2 family. As to quaternary structure, homooctamer. Dimer of tetramers. It depends on FMN as a cofactor. The cofactor is NADPH. Mg(2+) is required as a cofactor.

It is found in the cytoplasm. The catalysed reaction is isopentenyl diphosphate = dimethylallyl diphosphate. Its function is as follows. Involved in the biosynthesis of isoprenoids. Catalyzes the 1,3-allylic rearrangement of the homoallylic substrate isopentenyl (IPP) to its allylic isomer, dimethylallyl diphosphate (DMAPP). The polypeptide is Isopentenyl-diphosphate delta-isomerase (Synechococcus sp. (strain ATCC 27144 / PCC 6301 / SAUG 1402/1) (Anacystis nidulans)).